Here is a 741-residue protein sequence, read N- to C-terminus: Condensin complex subunit 2 (741 aa).

The segment at 1 to 67 is disordered; the sequence is MGPPGPALPA…NDDEKERLQR (67 aa). Residues S15, S25, and S28 each carry the phosphoserine modification. Phosphothreonine is present on T49. Phosphoserine occurs at positions 70, 78, 81, 87, 89, 92, 96, 201, and 233. Residues 361 to 377 show a composition bias toward acidic residues; sequence CGDFPDGSLGDDFDAND. The disordered stretch occupies residues 361–383; the sequence is CGDFPDGSLGDDFDANDEPDHTA. S432 carries the post-translational modification Phosphoserine. The interval 447 to 467 is disordered; that stretch reads FRPRRKQDAPSQSENKKKSTK. Residue K488 forms a Glycyl lysine isopeptide (Lys-Gly) (interchain with G-Cter in SUMO2) linkage. Position 496 is a phosphoserine (S496). Residues T598 and T605 each carry the phosphothreonine modification. Residue K637 is modified to N6-acetyllysine.

Belongs to the CND2 (condensin subunit 2) family. In terms of assembly, component of the condensin complex, which contains the SMC2 and SMC4 heterodimer, and three non SMC subunits that probably regulate the complex: NCAPH/BRRN1, NCAPD2/CAPD2 and NCAPG. In terms of processing, phosphorylated by CDK1. Its phosphorylation, as well as that of NCAPD2 and NCAPG subunits, activates the condensin complex and is required for chromosome condensation. As to expression, widely expressed at low level. Expressed in proliferating cells.

The protein resides in the nucleus. Its subcellular location is the cytoplasm. It is found in the chromosome. In terms of biological role, regulatory subunit of the condensin complex, a complex required for conversion of interphase chromatin into mitotic-like condense chromosomes. The condensin complex probably introduces positive supercoils into relaxed DNA in the presence of type I topoisomerases and converts nicked DNA into positive knotted forms in the presence of type II topoisomerases. Early in neurogenesis, may play an essential role to ensure accurate mitotic chromosome condensation in neuron stem cells, ultimately affecting neuron pool and cortex size. This chain is Condensin complex subunit 2, found in Homo sapiens (Human).